We begin with the raw amino-acid sequence, 326 residues long: Amino acid--[acyl-carrier-protein] ligase 1 (326 aa).

Cys131 is a binding site for Zn(2+). Residues Arg159, Glu161, and 168 to 169 each bind ATP; that span reads RL. Glu176 serves as a coordination point for Zn(2+). Residue Glu176 coordinates an L-alpha-amino acid. Residues Lys235 and 250-253 contribute to the ATP site; that span reads ACMS. Cys279 contributes to the Zn(2+) binding site. Residue Arg286 participates in ATP binding.

It belongs to the class-II aminoacyl-tRNA synthetase family. Amino acid--[acyl-carrier-protein] ligase subfamily. As to quaternary structure, homodimer. Zn(2+) serves as cofactor.

It catalyses the reaction an L-alpha-amino acid + holo-[ACP] + ATP = an L-alpha-aminoacyl-[ACP] + AMP + diphosphate. Its function is as follows. Catalyzes the ATP-dependent activation of L-glycine and its transfer to the phosphopantetheine prosthetic group covalently attached to the vicinal carrier protein bsr0959 of yet unknown function. May participate in nonribosomal peptide synthesis or related processes. L-alanine is a poor substrate whereas L-serine or D-amino acids are not substrates for ATP-dependent activation. Does not display tRNA aminoacylation activity. In Bradyrhizobium diazoefficiens (strain JCM 10833 / BCRC 13528 / IAM 13628 / NBRC 14792 / USDA 110), this protein is Amino acid--[acyl-carrier-protein] ligase 1.